The following is a 120-amino-acid chain: NAD(P)H-quinone oxidoreductase subunit 3, chloroplastic (120 aa).

3 consecutive transmembrane segments (helical) span residues 7-27 (YDSFWIFLLVCISIPLLAFSI), 63-83 (YMFALVFTVFDVETVFLYPWA), and 89-109 (LGLFAFVEVIVFIFILIVGLV).

This sequence belongs to the complex I subunit 3 family. NDH is composed of at least 16 different subunits, 5 of which are encoded in the nucleus.

It is found in the plastid. The protein resides in the chloroplast thylakoid membrane. It catalyses the reaction a plastoquinone + NADH + (n+1) H(+)(in) = a plastoquinol + NAD(+) + n H(+)(out). The enzyme catalyses a plastoquinone + NADPH + (n+1) H(+)(in) = a plastoquinol + NADP(+) + n H(+)(out). Its function is as follows. NDH shuttles electrons from NAD(P)H:plastoquinone, via FMN and iron-sulfur (Fe-S) centers, to quinones in the photosynthetic chain and possibly in a chloroplast respiratory chain. The immediate electron acceptor for the enzyme in this species is believed to be plastoquinone. Couples the redox reaction to proton translocation, and thus conserves the redox energy in a proton gradient. This chain is NAD(P)H-quinone oxidoreductase subunit 3, chloroplastic, found in Adiantum capillus-veneris (Maidenhair fern).